The following is a 362-amino-acid chain: 3-dehydroquinate synthase (362 aa).

Residues 71-76 (DGEQYK), 105-109 (GVVGD), 129-130 (TT), K142, K151, and 169-172 (CLKT) contribute to the NAD(+) site. Zn(2+) is bound by residues E184, H247, and H264.

Belongs to the sugar phosphate cyclases superfamily. Dehydroquinate synthase family. Co(2+) serves as cofactor. It depends on Zn(2+) as a cofactor. NAD(+) is required as a cofactor.

It localises to the cytoplasm. The enzyme catalyses 7-phospho-2-dehydro-3-deoxy-D-arabino-heptonate = 3-dehydroquinate + phosphate. It participates in metabolic intermediate biosynthesis; chorismate biosynthesis; chorismate from D-erythrose 4-phosphate and phosphoenolpyruvate: step 2/7. Its function is as follows. Catalyzes the conversion of 3-deoxy-D-arabino-heptulosonate 7-phosphate (DAHP) to dehydroquinate (DHQ). The protein is 3-dehydroquinate synthase of Escherichia coli O127:H6 (strain E2348/69 / EPEC).